Here is a 148-residue protein sequence, read N- to C-terminus: uncharacterized protein (148 aa).

The protein to A.tumefaciens Atu0565/AGR_C_992.

This is an uncharacterized protein from Rhizobium meliloti (strain 1021) (Ensifer meliloti).